The following is a 129-amino-acid chain: Small ribosomal subunit protein bS16m (129 aa).

It belongs to the bacterial ribosomal protein bS16 family. As to quaternary structure, component of the mitochondrial ribosome small subunit (28S) which comprises a 12S rRNA and about 30 distinct proteins.

The protein localises to the mitochondrion. This chain is Small ribosomal subunit protein bS16m (mRpS16), found in Drosophila melanogaster (Fruit fly).